The chain runs to 516 residues: GMP synthase [glutamine-hydrolyzing] (516 aa).

The Glutamine amidotransferase type-1 domain occupies 6–198 (KVIIVDYGSQ…LFKIAGIKAD (193 aa)). Catalysis depends on cysteine 83, which acts as the Nucleophile. Active-site residues include histidine 172 and glutamate 174. Positions 199-391 (WSMSSFCERV…LGLPDFIVWR (193 aa)) constitute a GMPS ATP-PPase domain. 227–233 (SGGIDST) contributes to the ATP binding site.

As to quaternary structure, homodimer.

It catalyses the reaction XMP + L-glutamine + ATP + H2O = GMP + L-glutamate + AMP + diphosphate + 2 H(+). It participates in purine metabolism; GMP biosynthesis; GMP from XMP (L-Gln route): step 1/1. Functionally, catalyzes the synthesis of GMP from XMP. This chain is GMP synthase [glutamine-hydrolyzing], found in Oleidesulfovibrio alaskensis (strain ATCC BAA-1058 / DSM 17464 / G20) (Desulfovibrio alaskensis).